Reading from the N-terminus, the 242-residue chain is Small ribosomal subunit protein uS3 (242 aa).

One can recognise a KH type-2 domain in the interval 39–110 (IRRFIHKKYG…QVRINVVEVE (72 aa)). The tract at residues 217–242 (TMPVGASPRRRGNRRPQQFEDRSNEG) is disordered. Over residues 233-242 (QQFEDRSNEG) the composition is skewed to basic and acidic residues.

The protein belongs to the universal ribosomal protein uS3 family. Part of the 30S ribosomal subunit. Forms a tight complex with proteins S10 and S14.

Functionally, binds the lower part of the 30S subunit head. Binds mRNA in the 70S ribosome, positioning it for translation. The polypeptide is Small ribosomal subunit protein uS3 (Prochlorococcus marinus (strain MIT 9313)).